A 140-amino-acid polypeptide reads, in one-letter code: ATP synthase epsilon chain (140 aa).

It belongs to the ATPase epsilon chain family. In terms of assembly, F-type ATPases have 2 components, CF(1) - the catalytic core - and CF(0) - the membrane proton channel. CF(1) has five subunits: alpha(3), beta(3), gamma(1), delta(1), epsilon(1). CF(0) has three main subunits: a, b and c.

The protein resides in the cell inner membrane. Functionally, produces ATP from ADP in the presence of a proton gradient across the membrane. The chain is ATP synthase epsilon chain from Chromobacterium violaceum (strain ATCC 12472 / DSM 30191 / JCM 1249 / CCUG 213 / NBRC 12614 / NCIMB 9131 / NCTC 9757 / MK).